We begin with the raw amino-acid sequence, 239 residues long: NADH-quinone oxidoreductase chain 2 (239 aa).

Residues Cys-96, Cys-101, Cys-137, and Cys-141 each contribute to the [2Fe-2S] cluster site.

This sequence belongs to the complex I 24 kDa subunit family. In terms of assembly, NDH-1 is composed of at least 14 different subunits, Nqo1 to Nqo14. The complex has a L-shaped structure, with the hydrophobic arm (subunits Nqo7, Nqo8, Nqo10 to Nqo14) embedded in the inner membrane and the hydrophilic peripheral arm (subunits Nqo1 to Nqo6, Nqo9) protruding into the bacterial cytoplasm. The hydrophilic domain contains all the redox centers. [2Fe-2S] cluster is required as a cofactor.

It is found in the cell inner membrane. It catalyses the reaction a quinone + NADH + 5 H(+)(in) = a quinol + NAD(+) + 4 H(+)(out). NDH-1 shuttles electrons from NADH, via FMN and iron-sulfur (Fe-S) centers, to quinones in the respiratory chain. The immediate electron acceptor for the enzyme in this species is believed to be ubiquinone. Couples the redox reaction to proton translocation (for every two electrons transferred, four hydrogen ions are translocated across the cytoplasmic membrane), and thus conserves the redox energy in a proton gradient. The protein is NADH-quinone oxidoreductase chain 2 (nqo2) of Paracoccus denitrificans.